We begin with the raw amino-acid sequence, 268 residues long: tRNA pseudouridine synthase A (268 aa).

The active-site Nucleophile is the aspartate 52. A substrate-binding site is contributed by tyrosine 110.

This sequence belongs to the tRNA pseudouridine synthase TruA family. In terms of assembly, homodimer.

The catalysed reaction is uridine(38/39/40) in tRNA = pseudouridine(38/39/40) in tRNA. Formation of pseudouridine at positions 38, 39 and 40 in the anticodon stem and loop of transfer RNAs. In Prochlorococcus marinus (strain MIT 9215), this protein is tRNA pseudouridine synthase A.